Consider the following 330-residue polypeptide: Autoinducer 2 import system permease protein LsrD (330 aa).

At 1-4 (MRIR) the chain is on the cytoplasmic side. The helical transmembrane segment at 5-25 (YGWELALAALLVIEIVAFGAI) threads the bilayer. Over 26–42 (NPRMLDLNMLLFSTSDF) the chain is Periplasmic. Residues 43–63 (ICIGIVALPLTMVIVSGGIDI) form a helical membrane-spanning segment. The Cytoplasmic segment spans residues 64–67 (SFGS). Transmembrane regions (helical) follow at residues 68–88 (TIGLCAIALGVLFQSGVPMPL) and 89–109 (AILLTLLLGALCGLINAGLII). Residues 110-115 (YTKVNP) are Cytoplasmic-facing. Residues 116 to 136 (LVITLGTLYLFAGSALLLSGM) form a helical membrane-spanning segment. At 137–159 (AGATGYEGIGGFPMAFTDFANLD) the chain is on the periplasmic side. Residues 160-180 (VLGLPVPLIIFLICLLVFWLW) traverse the membrane as a helical segment. The Cytoplasmic portion of the chain corresponds to 181–209 (LHKTHAGRNVFLIGQSPRVALYSAIPVNR). A helical transmembrane segment spans residues 210 to 230 (TLCALYAMTGLASAVAAVLLV). Topologically, residues 231 to 237 (SYFGSAR) are periplasmic. 2 consecutive transmembrane segments (helical) span residues 238 to 258 (SDLGASFLMPAITAVVLGGAN) and 259 to 279 (IYGGSGSIIGTAIAVLLVGYL). Over 280-285 (QQGLQM) the chain is Periplasmic. A helical membrane pass occupies residues 286–306 (AGVPNQVSSALSGALLIVVVV). At 307–330 (GRSVSLHRQQIKEWLARRANNPLP) the chain is on the cytoplasmic side.

The protein belongs to the binding-protein-dependent transport system permease family. AraH/RbsC subfamily. In terms of assembly, the complex is composed of two ATP-binding proteins (LsrA), two transmembrane proteins (LsrC and LsrD) and a solute-binding protein (LsrB).

It localises to the cell inner membrane. Part of the ABC transporter complex LsrABCD involved in autoinducer 2 (AI-2) import. Probably responsible for the translocation of the substrate across the membrane. This chain is Autoinducer 2 import system permease protein LsrD (lsrD), found in Shigella flexneri serotype 5b (strain 8401).